A 340-amino-acid chain; its full sequence is Deubiquitinase SseL (340 aa).

Residue H223 is part of the active site. C285 (nucleophile) is an active-site residue.

The protein belongs to the peptidase C79 family.

It is found in the secreted. It localises to the host cytoplasm. Its function is as follows. Effector proteins function to alter host cell physiology and promote bacterial survival in host tissues. This protease targets the host cell ubiquitin pathway by acting as a deubiquitinase in infected host cells. The sequence is that of Deubiquitinase SseL (sseL) from Salmonella choleraesuis (strain SC-B67).